Here is a 395-residue protein sequence, read N- to C-terminus: ATP phosphoribosyltransferase regulatory subunit (395 aa).

The protein belongs to the class-II aminoacyl-tRNA synthetase family. HisZ subfamily. Heteromultimer composed of HisG and HisZ subunits.

It is found in the cytoplasm. Its pathway is amino-acid biosynthesis; L-histidine biosynthesis; L-histidine from 5-phospho-alpha-D-ribose 1-diphosphate: step 1/9. Functionally, required for the first step of histidine biosynthesis. May allow the feedback regulation of ATP phosphoribosyltransferase activity by histidine. This is ATP phosphoribosyltransferase regulatory subunit from Pseudomonas entomophila (strain L48).